A 469-amino-acid chain; its full sequence is Cytosolic Fe-S cluster assembly factor NAR1 (469 aa).

Cys20, Cys56, Cys59, Cys62, Cys168, Cys215, Cys394, and Cys398 together coordinate [4Fe-4S] cluster.

Belongs to the NARF family.

In terms of biological role, component of the cytosolic Fe/S protein assembly machinery. Required for maturation of extramitochondrial Fe/S proteins. May play a role in the transfer of pre-assembled Fe/S clusters to target apoproteins. The protein is Cytosolic Fe-S cluster assembly factor NAR1 (NAR1) of Kluyveromyces lactis (strain ATCC 8585 / CBS 2359 / DSM 70799 / NBRC 1267 / NRRL Y-1140 / WM37) (Yeast).